The primary structure comprises 310 residues: Vomeronasal type-1 receptor 53 (310 aa).

Residues 1–20 lie on the Extracellular side of the membrane; it reads MNKANLLHTDINLKITLFSE. A helical transmembrane segment spans residues 21 to 41; that stretch reads VSVGISANSILIFAHLCMLLG. Topologically, residues 42-50 are cytoplasmic; sequence ENRPKPIDL. A helical membrane pass occupies residues 51-71; that stretch reads YIAFFSLTQLMLLITMGLIAV. Residues 72-93 are Extracellular-facing; the sequence is DMFMPWGRWDSTTCQSLIYLHR. Residues C85 and C172 are joined by a disulfide bond. The helical transmembrane segment at 94 to 114 threads the bilayer; sequence LLRGLTLSATCLLNVLWTITL. At 115–134 the chain is on the cytoplasmic side; it reads SPRSSCLTKFKHKSLQHISC. Residues 135 to 155 traverse the membrane as a helical segment; that stretch reads AFLFLCVLYMSFNSHLFISII. Residues 156 to 183 lie on the Extracellular side of the membrane; that stretch reads AYPNLTLENFMYVTQSCSLIPLSYFRKS. The N-linked (GlcNAc...) asparagine glycan is linked to N159. A helical transmembrane segment spans residues 184 to 204; it reads MFSIPMAIREALLIGLMALSG. Residues 205–238 are Cytoplasmic-facing; sequence GYMVAHLWRHKKQAQHLHRTSLSSKASPEQRATR. A helical transmembrane segment spans residues 239-259; sequence TIMLLMSFFVVLYILDLVIFH. Over 260 to 268 the chain is Extracellular; sequence SRMKFKDGS. A helical membrane pass occupies residues 269–289; that stretch reads ILYGVQIIVSHSYATVSPFVF. The Cytoplasmic portion of the chain corresponds to 290–310; it reads ICTEKRITNFLRSMCGRIVNI.

It belongs to the G-protein coupled receptor 1 family.

It localises to the cell membrane. Putative pheromone receptor implicated in the regulation of social and reproductive behavior. The polypeptide is Vomeronasal type-1 receptor 53 (Vmn1r53) (Mus musculus (Mouse)).